Reading from the N-terminus, the 511-residue chain is NADH-quinone oxidoreductase subunit N 1 (511 aa).

The next 14 helical transmembrane spans lie at 15–35 (LALP…LDLV), 46–66 (ALAL…WQAV), 89–109 (FAIY…LMSI), 120–140 (GEYH…ASGM), 142–162 (LILL…LVGF), 177–197 (LLLG…FYGL), 221–241 (PIAL…IAAV), 264–284 (VAVK…MLWP), 289–309 (YTPI…FAAL), 317–337 (LLAY…VASD), 347–367 (GILV…AVIT), 393–413 (AVLL…AGFW), 426–446 (GHYT…YYYL), and 471–491 (AALW…EVFL).

This sequence belongs to the complex I subunit 2 family. As to quaternary structure, NDH-1 is composed of 14 different subunits. Subunits NuoA, H, J, K, L, M, N constitute the membrane sector of the complex.

The protein localises to the cell inner membrane. It catalyses the reaction a quinone + NADH + 5 H(+)(in) = a quinol + NAD(+) + 4 H(+)(out). NDH-1 shuttles electrons from NADH, via FMN and iron-sulfur (Fe-S) centers, to quinones in the respiratory chain. The immediate electron acceptor for the enzyme in this species is believed to be ubiquinone. Couples the redox reaction to proton translocation (for every two electrons transferred, four hydrogen ions are translocated across the cytoplasmic membrane), and thus conserves the redox energy in a proton gradient. This is NADH-quinone oxidoreductase subunit N 1 from Koribacter versatilis (strain Ellin345).